A 364-amino-acid chain; its full sequence is S-adenosylmethionine:tRNA ribosyltransferase-isomerase (364 aa).

The protein belongs to the QueA family. Monomer.

The protein localises to the cytoplasm. The enzyme catalyses 7-aminomethyl-7-carbaguanosine(34) in tRNA + S-adenosyl-L-methionine = epoxyqueuosine(34) in tRNA + adenine + L-methionine + 2 H(+). Its pathway is tRNA modification; tRNA-queuosine biosynthesis. In terms of biological role, transfers and isomerizes the ribose moiety from AdoMet to the 7-aminomethyl group of 7-deazaguanine (preQ1-tRNA) to give epoxyqueuosine (oQ-tRNA). The sequence is that of S-adenosylmethionine:tRNA ribosyltransferase-isomerase from Bradyrhizobium sp. (strain BTAi1 / ATCC BAA-1182).